A 626-amino-acid polypeptide reads, in one-letter code: Endoglucanase 19 (626 aa).

The N-terminal stretch at 1–23 is a signal peptide; sequence MGSRTTISILVVLLLGLVQLAIS. The active-site Nucleophile is Asp79. Residues His412, Asp464, and Glu473 contribute to the active site. Residues 515-536 are disordered; sequence APVPQRKPTKPPAASSPSPITI. Positions 526–536 are enriched in low complexity; it reads PAASSPSPITI. 2 N-linked (GlcNAc...) asparagine glycosylation sites follow: Asn560 and Asn622.

The protein belongs to the glycosyl hydrolase 9 (cellulase E) family.

It is found in the secreted. The enzyme catalyses Endohydrolysis of (1-&gt;4)-beta-D-glucosidic linkages in cellulose, lichenin and cereal beta-D-glucans.. The chain is Endoglucanase 19 from Arabidopsis thaliana (Mouse-ear cress).